Consider the following 305-residue polypeptide: Peroxidase A2 (305 aa).

Glutamine 1 is subject to Pyrrolidone carboxylic acid. N-linked (GlcNAc...) asparagine glycans are attached at residues asparagine 3 and asparagine 13. Intrachain disulfides connect cysteine 11–cysteine 91, cysteine 44–cysteine 49, cysteine 97–cysteine 299, and cysteine 176–cysteine 208. The active-site Proton acceptor is the histidine 42. The Ca(2+) site is built by aspartate 43, valine 46, glycine 48, aspartate 50, and serine 52. Proline 139 contacts substrate. Asparagine 147 carries N-linked (GlcNAc...) asparagine glycosylation. Histidine 169 provides a ligand contact to heme b. Ca(2+) is bound at residue threonine 170. 3 N-linked (GlcNAc...) asparagine glycosylation sites follow: asparagine 185, asparagine 197, and asparagine 211. Ca(2+) contacts are provided by aspartate 221, threonine 224, and aspartate 229. Residue asparagine 267 is glycosylated (N-linked (GlcNAc...) asparagine).

This sequence belongs to the peroxidase family. Classical plant (class III) peroxidase subfamily. Ca(2+) serves as cofactor. The cofactor is heme b.

The catalysed reaction is 2 a phenolic donor + H2O2 = 2 a phenolic radical donor + 2 H2O. Removal of H(2)O(2), oxidation of toxic reductants, biosynthesis and degradation of lignin, suberization, auxin catabolism, response to environmental stresses such as wounding, pathogen attack and oxidative stress. These functions might be dependent on each isozyme/isoform in each plant tissue. This is Peroxidase A2 (HRPA2) from Armoracia rusticana (Horseradish).